The following is a 151-amino-acid chain: Ribonuclease H (151 aa).

The region spanning 1–141 (MQEVTVYSDG…ADALANKGVE (141 aa)) is the RNase H type-1 domain. Residues D9, E47, D69, and D133 each coordinate Mg(2+).

The protein belongs to the RNase H family. As to quaternary structure, monomer. Mg(2+) serves as cofactor.

Its subcellular location is the cytoplasm. It carries out the reaction Endonucleolytic cleavage to 5'-phosphomonoester.. Its function is as follows. Endonuclease that specifically degrades the RNA of RNA-DNA hybrids. This is Ribonuclease H from Ralstonia nicotianae (strain ATCC BAA-1114 / GMI1000) (Ralstonia solanacearum).